Reading from the N-terminus, the 67-residue chain is DNA-directed RNA polymerase subunit omega (67 aa).

It belongs to the RNA polymerase subunit omega family. The RNAP catalytic core consists of 2 alpha, 1 beta, 1 beta' and 1 omega subunit. When a sigma factor is associated with the core the holoenzyme is formed, which can initiate transcription.

The catalysed reaction is RNA(n) + a ribonucleoside 5'-triphosphate = RNA(n+1) + diphosphate. Promotes RNA polymerase assembly. Latches the N- and C-terminal regions of the beta' subunit thereby facilitating its interaction with the beta and alpha subunits. In Dictyoglomus turgidum (strain DSM 6724 / Z-1310), this protein is DNA-directed RNA polymerase subunit omega.